We begin with the raw amino-acid sequence, 176 residues long: Disulfide bond formation protein B (176 aa).

Residues 1–11 (MLQLTTYRNLQ) lie on the Cytoplasmic side of the membrane. The helical transmembrane segment at 12–28 (VFLVIMTAIGMSFALFF) threads the bilayer. Residues 29-46 (LQRYMGFSPCPLCIFQRI) lie on the Periplasmic side of the membrane. C38 and C41 are joined by a disulfide. The chain crosses the membrane as a helical span at residues 47 to 63 (GLMIMGGFALIAALFHP). Residues 64 to 70 (KSMVIRL) are Cytoplasmic-facing. Residues 71 to 88 (LLWLGSLAGIGWAAIVAG) traverse the membrane as a helical segment. Residues 89 to 145 (RHVWLQHLPADQVPSCGPGLDYWLDTLPMQQVLKEVFAGSGECASIDWTFLGLSIPE) are Periplasmic-facing. Cysteines 104 and 131 form a disulfide. A helical transmembrane segment spans residues 146–164 (QSLILFSILILTHLLILWR). Residues 165–176 (IVRPATPKPLAR) lie on the Cytoplasmic side of the membrane.

This sequence belongs to the DsbB family.

It is found in the cell inner membrane. Functionally, required for disulfide bond formation in some periplasmic proteins. Acts by oxidizing the DsbA protein. The chain is Disulfide bond formation protein B from Psychrobacter cryohalolentis (strain ATCC BAA-1226 / DSM 17306 / VKM B-2378 / K5).